A 166-amino-acid chain; its full sequence is 16S rRNA aminocarboxypropyltransferase (166 aa).

Residues threonine 17, isoleucine 62, leucine 84, tyrosine 99, and serine 103 each contribute to the S-adenosyl-L-methionine site.

Belongs to the TDD superfamily. TSR3 family.

The protein localises to the cytoplasm. The catalysed reaction is an N(1)-methylpseudouridine in rRNA + S-adenosyl-L-methionine = N(1)-methyl-N(3)-[(3S)-3-amino-3-carboxypropyl]pseudouridine in rRNA + S-methyl-5'-thioadenosine + H(+). Aminocarboxypropyltransferase that catalyzes the aminocarboxypropyl transfer on pseudouridine corresponding to position 914 in M.jannaschii 16S rRNA. It constitutes the last step in biosynthesis of the hypermodified N1-methyl-N3-(3-amino-3-carboxypropyl) pseudouridine (m1acp3-Psi). This Saccharolobus islandicus (strain M.16.27) (Sulfolobus islandicus) protein is 16S rRNA aminocarboxypropyltransferase.